A 37-amino-acid chain; its full sequence is Potassium channel toxin alpha-KTx 1.4 (37 aa).

Cystine bridges form between cysteine 7-cysteine 28, cysteine 13-cysteine 33, and cysteine 17-cysteine 35.

This sequence belongs to the short scorpion toxin superfamily. Potassium channel inhibitor family. Alpha-KTx 01 subfamily. Expressed by the venom gland.

Its subcellular location is the secreted. Blocks selectively the high conductance calcium-activated (maxi-K) potassium channels. The sequence is that of Potassium channel toxin alpha-KTx 1.4 from Centruroides limbatus (Bark scorpion).